Consider the following 373-residue polypeptide: Transaldolase (373 aa).

The active-site Schiff-base intermediate with substrate is K143.

Belongs to the transaldolase family. Type 2 subfamily.

It localises to the cytoplasm. It carries out the reaction D-sedoheptulose 7-phosphate + D-glyceraldehyde 3-phosphate = D-erythrose 4-phosphate + beta-D-fructose 6-phosphate. Its pathway is carbohydrate degradation; pentose phosphate pathway; D-glyceraldehyde 3-phosphate and beta-D-fructose 6-phosphate from D-ribose 5-phosphate and D-xylulose 5-phosphate (non-oxidative stage): step 2/3. In terms of biological role, transaldolase is important for the balance of metabolites in the pentose-phosphate pathway. The chain is Transaldolase (tal) from Mycobacterium tuberculosis (strain ATCC 25618 / H37Rv).